We begin with the raw amino-acid sequence, 254 residues long: Isoprenyl transferase (254 aa).

The active site involves aspartate 34. Residue aspartate 34 participates in Mg(2+) binding. Substrate-binding positions include 35 to 38 (GNGR), tryptophan 39, arginine 47, histidine 51, and 79 to 81 (STE). The active-site Proton acceptor is the asparagine 82. Residues tryptophan 83, arginine 85, arginine 202, and 208–210 (RIS) contribute to the substrate site. Residue glutamate 221 coordinates Mg(2+).

This sequence belongs to the UPP synthase family. As to quaternary structure, homodimer. The cofactor is Mg(2+).

In terms of biological role, catalyzes the condensation of isopentenyl diphosphate (IPP) with allylic pyrophosphates generating different type of terpenoids. The polypeptide is Isoprenyl transferase (Staphylococcus saprophyticus subsp. saprophyticus (strain ATCC 15305 / DSM 20229 / NCIMB 8711 / NCTC 7292 / S-41)).